We begin with the raw amino-acid sequence, 337 residues long: Anthranilate phosphoribosyltransferase (337 aa).

5-phospho-alpha-D-ribose 1-diphosphate contacts are provided by residues G81, 84 to 85 (GD), S89, 91 to 94 (NVST), 109 to 117 (KHGNRAMSS), and A121. An anthranilate-binding site is contributed by G81. S93 provides a ligand contact to Mg(2+). N112 is a binding site for anthranilate. R167 serves as a coordination point for anthranilate. Positions 226 and 227 each coordinate Mg(2+).

The protein belongs to the anthranilate phosphoribosyltransferase family. Homodimer. It depends on Mg(2+) as a cofactor.

It carries out the reaction N-(5-phospho-beta-D-ribosyl)anthranilate + diphosphate = 5-phospho-alpha-D-ribose 1-diphosphate + anthranilate. Its pathway is amino-acid biosynthesis; L-tryptophan biosynthesis; L-tryptophan from chorismate: step 2/5. Catalyzes the transfer of the phosphoribosyl group of 5-phosphorylribose-1-pyrophosphate (PRPP) to anthranilate to yield N-(5'-phosphoribosyl)-anthranilate (PRA). The chain is Anthranilate phosphoribosyltransferase from Afipia carboxidovorans (strain ATCC 49405 / DSM 1227 / KCTC 32145 / OM5) (Oligotropha carboxidovorans).